The sequence spans 133 residues: S-adenosylmethionine decarboxylase proenzyme (133 aa).

Catalysis depends on Ser63, which acts as the Schiff-base intermediate with substrate; via pyruvic acid. At Ser63 the chain carries Pyruvic acid (Ser); by autocatalysis. Residue His68 is the Proton acceptor; for processing activity of the active site. The active-site Proton donor; for catalytic activity is the Cys83.

The protein belongs to the prokaryotic AdoMetDC family. Type 1 subfamily. In terms of assembly, heterotetramer of two alpha and two beta chains arranged as a dimer of alpha/beta heterodimers. The cofactor is pyruvate. In terms of processing, is synthesized initially as an inactive proenzyme. Formation of the active enzyme involves a self-maturation process in which the active site pyruvoyl group is generated from an internal serine residue via an autocatalytic post-translational modification. Two non-identical subunits are generated from the proenzyme in this reaction, and the pyruvate is formed at the N-terminus of the alpha chain, which is derived from the carboxyl end of the proenzyme. The post-translation cleavage follows an unusual pathway, termed non-hydrolytic serinolysis, in which the side chain hydroxyl group of the serine supplies its oxygen atom to form the C-terminus of the beta chain, while the remainder of the serine residue undergoes an oxidative deamination to produce ammonia and the pyruvoyl group blocking the N-terminus of the alpha chain.

It carries out the reaction S-adenosyl-L-methionine + H(+) = S-adenosyl 3-(methylsulfanyl)propylamine + CO2. Its pathway is amine and polyamine biosynthesis; S-adenosylmethioninamine biosynthesis; S-adenosylmethioninamine from S-adenosyl-L-methionine: step 1/1. Functionally, catalyzes the decarboxylation of S-adenosylmethionine to S-adenosylmethioninamine (dcAdoMet), the propylamine donor required for the synthesis of the polyamines spermine and spermidine from the diamine putrescine. The protein is S-adenosylmethionine decarboxylase proenzyme of Acidithiobacillus ferrooxidans (strain ATCC 23270 / DSM 14882 / CIP 104768 / NCIMB 8455) (Ferrobacillus ferrooxidans (strain ATCC 23270)).